The primary structure comprises 366 residues: Chorismate synthase (366 aa).

The NADP(+) site is built by Arg-48 and Arg-54. FMN-binding positions include 132 to 134, 244 to 245, Gly-289, 304 to 308, and Arg-330; these read RSS, NA, and KPTSS.

This sequence belongs to the chorismate synthase family. As to quaternary structure, homotetramer. It depends on FMNH2 as a cofactor.

The enzyme catalyses 5-O-(1-carboxyvinyl)-3-phosphoshikimate = chorismate + phosphate. Its pathway is metabolic intermediate biosynthesis; chorismate biosynthesis; chorismate from D-erythrose 4-phosphate and phosphoenolpyruvate: step 7/7. Functionally, catalyzes the anti-1,4-elimination of the C-3 phosphate and the C-6 proR hydrogen from 5-enolpyruvylshikimate-3-phosphate (EPSP) to yield chorismate, which is the branch point compound that serves as the starting substrate for the three terminal pathways of aromatic amino acid biosynthesis. This reaction introduces a second double bond into the aromatic ring system. The protein is Chorismate synthase of Methylobacterium radiotolerans (strain ATCC 27329 / DSM 1819 / JCM 2831 / NBRC 15690 / NCIMB 10815 / 0-1).